A 654-amino-acid chain; its full sequence is Acetyl-coenzyme A synthetase (654 aa).

CoA-binding positions include 190 to 193 and Thr-313; that span reads RGGK. ATP contacts are provided by residues 389-391, 413-418, Asp-504, and Arg-519; these read GEP and DTWWQT. Ser-527 provides a ligand contact to CoA. Arg-530 contributes to the ATP binding site. Residues Val-541 and Val-546 each coordinate Mg(2+). Lys-613 carries the N6-acetyllysine modification.

The protein belongs to the ATP-dependent AMP-binding enzyme family. Mg(2+) is required as a cofactor. In terms of processing, acetylated. Deacetylation by the SIR2-homolog deacetylase activates the enzyme.

It catalyses the reaction acetate + ATP + CoA = acetyl-CoA + AMP + diphosphate. In terms of biological role, catalyzes the conversion of acetate into acetyl-CoA (AcCoA), an essential intermediate at the junction of anabolic and catabolic pathways. AcsA undergoes a two-step reaction. In the first half reaction, AcsA combines acetate with ATP to form acetyl-adenylate (AcAMP) intermediate. In the second half reaction, it can then transfer the acetyl group from AcAMP to the sulfhydryl group of CoA, forming the product AcCoA. In Leptospira borgpetersenii serovar Hardjo-bovis (strain L550), this protein is Acetyl-coenzyme A synthetase.